The sequence spans 207 residues: Probable GTP-binding protein EngB (207 aa).

Residues 24–199 (GGYEVAFAGR…RGIVGGWLGL (176 aa)) form the EngB-type G domain. GTP-binding positions include 32 to 39 (GRSNAGKS), 59 to 63 (GRTQQ), 77 to 80 (DLPG), 144 to 147 (TKAD), and 178 to 180 (YSG). Residues Ser39 and Thr61 each coordinate Mg(2+).

It belongs to the TRAFAC class TrmE-Era-EngA-EngB-Septin-like GTPase superfamily. EngB GTPase family. It depends on Mg(2+) as a cofactor.

Necessary for normal cell division and for the maintenance of normal septation. The chain is Probable GTP-binding protein EngB from Xanthomonas oryzae pv. oryzae (strain MAFF 311018).